Reading from the N-terminus, the 123-residue chain is Small ribosomal subunit protein uS11 (123 aa).

Belongs to the universal ribosomal protein uS11 family. As to quaternary structure, part of the 30S ribosomal subunit. Interacts with proteins S7 and S18. Binds to IF-3.

Its function is as follows. Located on the platform of the 30S subunit, it bridges several disparate RNA helices of the 16S rRNA. Forms part of the Shine-Dalgarno cleft in the 70S ribosome. This chain is Small ribosomal subunit protein uS11, found in Coxiella burnetii (strain CbuK_Q154) (Coxiella burnetii (strain Q154)).